The sequence spans 237 residues: Ribonuclease PH (237 aa).

Phosphate contacts are provided by residues Arg86 and 124-126; that span reads GTR.

It belongs to the RNase PH family. Homohexameric ring arranged as a trimer of dimers.

It carries out the reaction tRNA(n+1) + phosphate = tRNA(n) + a ribonucleoside 5'-diphosphate. Phosphorolytic 3'-5' exoribonuclease that plays an important role in tRNA 3'-end maturation. Removes nucleotide residues following the 3'-CCA terminus of tRNAs; can also add nucleotides to the ends of RNA molecules by using nucleoside diphosphates as substrates, but this may not be physiologically important. Probably plays a role in initiation of 16S rRNA degradation (leading to ribosome degradation) during starvation. This chain is Ribonuclease PH, found in Shewanella sediminis (strain HAW-EB3).